Consider the following 254-residue polypeptide: Cdc42 effector protein 3 (254 aa).

A CRIB domain is found at 31–45 (ISPPLGDFRHTIHIG). At tyrosine 63 the chain carries Phosphotyrosine. 3 positions are modified to phosphoserine: serine 89, serine 108, and serine 144. The interval 165 to 205 (VHQGDTSWGSSGSGSQSSQGRDSHSSSLSEQSSDWPADDMF) is disordered. Residues 171–197 (SWGSSGSGSQSSQGRDSHSSSLSEQSS) show a composition bias toward low complexity.

The protein belongs to the BORG/CEP family. Interacts with RHOQ and CDC42, in a GTP-dependent manner, and with SEPT7.

The protein resides in the endomembrane system. It localises to the cytoplasm. It is found in the cytoskeleton. Its function is as follows. Probably involved in the organization of the actin cytoskeleton. May act downstream of CDC42 to induce actin filament assembly leading to cell shape changes. Induces pseudopodia formation in fibroblasts. The polypeptide is Cdc42 effector protein 3 (Cdc42ep3) (Mus musculus (Mouse)).